The chain runs to 456 residues: Bacteriochlorophyllide d C-12(1)-methyltransferase (456 aa).

The 228-residue stretch at 178–405 folds into the Radical SAM core domain; sequence HAKKYSQLIP…MFEPKKLGGE (228 aa). Residues Cys-194, Cys-198, and Cys-201 each coordinate [4Fe-4S] cluster.

This sequence belongs to the radical SAM superfamily. [4Fe-4S] cluster serves as cofactor.

It localises to the cytoplasm. The enzyme catalyses 8-ethyl-12-methyl-3-vinylbacteriochlorophyllide d + S-adenosyl-L-methionine = 8,12-diethyl-3-vinylbacteriochlorophyllide d + S-adenosyl-L-homocysteine + H(+). Its pathway is porphyrin-containing compound metabolism; bacteriochlorophyll biosynthesis (light-independent). In terms of biological role, involved in the biosynthesis of the major light-harvesting pigment bacteriochlorophyll c (BChlc), which confers a significant competitive advantage to green sulfur bacteria living at limiting red and near-infrared light intensities. BchR is a methyltransferase that adds a single methyl group to the methyl carbon at the C-12(1) position of 8-ethyl-12-methyl-3-vinylbacteriochlorophyllide d to yield 8,12-diethyl-3-vinylbacteriochlorophyllide d. This chain is Bacteriochlorophyllide d C-12(1)-methyltransferase, found in Chlorobaculum tepidum (strain ATCC 49652 / DSM 12025 / NBRC 103806 / TLS) (Chlorobium tepidum).